A 397-amino-acid polypeptide reads, in one-letter code: Argininosuccinate synthase (397 aa).

8–16 (AYSGGLDTS) serves as a coordination point for ATP. L-citrulline is bound by residues Tyr86 and Ser91. Gly116 provides a ligand contact to ATP. L-aspartate contacts are provided by Thr118, Asn122, and Asp123. Residue Asn122 coordinates L-citrulline. L-citrulline contacts are provided by Arg126, Ser175, Ser184, Glu260, and Tyr272.

It belongs to the argininosuccinate synthase family. Type 1 subfamily. As to quaternary structure, homotetramer.

It localises to the cytoplasm. The catalysed reaction is L-citrulline + L-aspartate + ATP = 2-(N(omega)-L-arginino)succinate + AMP + diphosphate + H(+). The protein operates within amino-acid biosynthesis; L-arginine biosynthesis; L-arginine from L-ornithine and carbamoyl phosphate: step 2/3. The polypeptide is Argininosuccinate synthase (Clostridium botulinum (strain 657 / Type Ba4)).